The sequence spans 441 residues: MKERSTELVQGFRHSVPYINAHRGKTFVVMLGGEAIEHENFSSIVNDIGLLHSLGIRLVVVYGARPQIDSNLAQHHYEPVYHKHTRVTDARTLEMVKQAAGLLQLDITARLSMSLNNTPLQGAHINVVSGNFIIAQPLGVDDGVDYCHSGRIRRIDEEAIHRQLDNGAIVLLGPVAVSVTGESFNLTSEEVATQLAIKLKAEKMIGFCSSQGVTDSEGNIISELFPNDAQKRIEDLEQEGDYNSGTVRFLRGAVKACRSGVRRSHLLSYQEDGALVQELFSRDGIGTQIVMESAEQVRRATINDIGGILELIRPLEQQGILVRRSREQLEMEIDKFTIIERDNLTIACAALYPFPEEQIGEMACVAVHPDYRSSSRGEMLLKRVANQARQMGLKKLFVLTTRSIHWFQERGFTPAEVDVLPIQKQELYNYQRRSKILLADL.

In terms of domain architecture, N-acetyltransferase spans glutamate 295–serine 434.

This sequence belongs to the acetyltransferase family. ArgA subfamily. In terms of assembly, homohexamer.

It is found in the cytoplasm. It carries out the reaction L-glutamate + acetyl-CoA = N-acetyl-L-glutamate + CoA + H(+). The protein operates within amino-acid biosynthesis; L-arginine biosynthesis; N(2)-acetyl-L-ornithine from L-glutamate: step 1/4. The chain is Amino-acid acetyltransferase from Yersinia enterocolitica serotype O:8 / biotype 1B (strain NCTC 13174 / 8081).